Consider the following 235-residue polypeptide: MNHSAGTFPPVIAVLPAAGIGSRMQADCPKQYLTIGHQTILEHAIHALLRHPRIPQVIVAIGPDDQQFHQLPIAKDPRVRVTVGGQQRADSVMAGLQLAGEAKWVLVHDAARPCLHAEDLERLLAITEHSEVGGILAAPVRDTMKRAEPGRSTISHTVERQDLWHALTPQLFPLALLKLCLQRAMDDGATVTDEASALEHCGYHPLLVSGRSDNIKVTRPEDLALAAFYLTQLDN.

It belongs to the IspD/TarI cytidylyltransferase family. IspD subfamily. Homodimer.

It carries out the reaction 2-C-methyl-D-erythritol 4-phosphate + CTP + H(+) = 4-CDP-2-C-methyl-D-erythritol + diphosphate. It participates in isoprenoid biosynthesis; isopentenyl diphosphate biosynthesis via DXP pathway; isopentenyl diphosphate from 1-deoxy-D-xylulose 5-phosphate: step 2/6. Catalyzes the formation of 4-diphosphocytidyl-2-C-methyl-D-erythritol from CTP and 2-C-methyl-D-erythritol 4-phosphate (MEP). The protein is 2-C-methyl-D-erythritol 4-phosphate cytidylyltransferase of Serratia proteamaculans (strain 568).